Reading from the N-terminus, the 555-residue chain is Suppressor of tumorigenicity 7 protein-like (555 aa).

4 consecutive transmembrane segments (helical) span residues Ala-32–Leu-52, Phe-76–Trp-96, Leu-504–Leu-524, and Leu-531–Val-551.

The protein belongs to the ST7 family.

It is found in the membrane. The chain is Suppressor of tumorigenicity 7 protein-like (ST7L) from Gallus gallus (Chicken).